Here is a 255-residue protein sequence, read N- to C-terminus: Aliphatic sulfonates import ATP-binding protein SsuB (255 aa).

The ABC transporter domain maps to 12–233 (LLLNAVSKHY…RLGSVRLAEL (222 aa)). 44–51 (GRSGGGKS) contributes to the ATP binding site.

Belongs to the ABC transporter superfamily. Aliphatic sulfonates importer (TC 3.A.1.17.2) family. In terms of assembly, the complex is composed of two ATP-binding proteins (SsuB), two transmembrane proteins (SsuC) and a solute-binding protein (SsuA).

The protein localises to the cell inner membrane. The enzyme catalyses ATP + H2O + aliphatic sulfonate-[sulfonate-binding protein]Side 1 = ADP + phosphate + aliphatic sulfonateSide 2 + [sulfonate-binding protein]Side 1.. Its function is as follows. Part of the ABC transporter complex SsuABC involved in aliphatic sulfonates import. Responsible for energy coupling to the transport system. In Escherichia coli O6:H1 (strain CFT073 / ATCC 700928 / UPEC), this protein is Aliphatic sulfonates import ATP-binding protein SsuB.